A 786-amino-acid polypeptide reads, in one-letter code: Spermatogenesis-associated protein 20 (786 aa).

The signal sequence occupies residues 1 to 22; the sequence is MLGARAWLGRVLLLPRAGAGLA. Residues 23 to 61 are disordered; sequence ASRRGSSSRDKDRSATVSSSVPMPAGGKGSHPSSTPQRV. Ser649 is modified (phosphoserine).

It localises to the secreted. In terms of biological role, may play a role in fertility regulation. This Homo sapiens (Human) protein is Spermatogenesis-associated protein 20 (SPATA20).